The sequence spans 503 residues: UDP-N-acetylmuramate--L-alanine ligase (503 aa).

ATP is bound at residue 120-126 (GTHGKTS).

It belongs to the MurCDEF family.

It is found in the cytoplasm. The catalysed reaction is UDP-N-acetyl-alpha-D-muramate + L-alanine + ATP = UDP-N-acetyl-alpha-D-muramoyl-L-alanine + ADP + phosphate + H(+). It functions in the pathway cell wall biogenesis; peptidoglycan biosynthesis. Its function is as follows. Cell wall formation. The chain is UDP-N-acetylmuramate--L-alanine ligase from Rhodococcus opacus (strain B4).